Reading from the N-terminus, the 215-residue chain is Cytochrome b6 (215 aa).

The helical transmembrane segment at 32–52 (IFYCLGGITLTCFLVQVATGF) threads the bilayer. C35 contacts heme c. Heme b-binding residues include H86 and H100. 3 helical membrane passes run 90–110 (ASMM…TGGF), 116–136 (LTWV…VTGY), and 186–206 (LHTF…FPMI). Residues H187 and H202 each contribute to the heme b site.

This sequence belongs to the cytochrome b family. PetB subfamily. In terms of assembly, the 4 large subunits of the cytochrome b6-f complex are cytochrome b6, subunit IV (17 kDa polypeptide, PetD), cytochrome f and the Rieske protein, while the 4 small subunits are PetG, PetL, PetM and PetN. The complex functions as a dimer. It depends on heme b as a cofactor. Heme c serves as cofactor.

It is found in the plastid. It localises to the chloroplast thylakoid membrane. Its function is as follows. Component of the cytochrome b6-f complex, which mediates electron transfer between photosystem II (PSII) and photosystem I (PSI), cyclic electron flow around PSI, and state transitions. This is Cytochrome b6 from Lactuca sativa (Garden lettuce).